The sequence spans 65 residues: LKDGYIVDDRNCTYFCGTNAYCNEECVKLKGESGYCQWVGRYGNACWCYKLPDHVRTVQAGRCRS.

In terms of domain architecture, LCN-type CS-alpha/beta spans 2 to 64; that stretch reads KDGYIVDDRN…VRTVQAGRCR (63 aa). 4 cysteine pairs are disulfide-bonded: Cys12/Cys63, Cys16/Cys36, Cys22/Cys46, and Cys26/Cys48.

Belongs to the long (4 C-C) scorpion toxin superfamily. Sodium channel inhibitor family. Alpha subfamily. As to expression, expressed by the venom gland.

The protein resides in the secreted. In terms of biological role, alpha toxins bind voltage-independently at site-3 of sodium channels (Nav) and inhibit the inactivation of the activated channels, thereby blocking neuronal transmission. This is Alpha-toxin Bot11 from Buthus occitanus tunetanus (Common European scorpion).